The following is a 686-amino-acid chain: UvrABC system protein C (686 aa).

Basic and acidic residues predominate over residues 1 to 14; the sequence is MVHDSTDDPDDTRV. Positions 1–48 are disordered; the sequence is MVHDSTDDPDDTRVRKSRRGTALDAPPQETAPPDLDPATTGGDDEDDA. The GIY-YIG domain occupies 81–160; that stretch reads TSPGVYRMLN…IKQLRPRFNV (80 aa). Residues 270–305 enclose the UVR domain; sequence HAVKQELAGEMEKAANELEFETAALYRDRLAALSAI.

This sequence belongs to the UvrC family. In terms of assembly, interacts with UvrB in an incision complex.

Its subcellular location is the cytoplasm. Its function is as follows. The UvrABC repair system catalyzes the recognition and processing of DNA lesions. UvrC both incises the 5' and 3' sides of the lesion. The N-terminal half is responsible for the 3' incision and the C-terminal half is responsible for the 5' incision. The sequence is that of UvrABC system protein C from Bradyrhizobium diazoefficiens (strain JCM 10833 / BCRC 13528 / IAM 13628 / NBRC 14792 / USDA 110).